We begin with the raw amino-acid sequence, 81 residues long: Short neurotoxin 1 (81 aa).

An N-terminal signal peptide occupies residues 1–21 (MKTLLLTLVVVTIVCLDLGYT). 4 disulfide bridges follow: Cys24–Cys43, Cys38–Cys60, Cys62–Cys73, and Cys74–Cys79.

The protein belongs to the three-finger toxin family. Short-chain subfamily. Type I alpha-neurotoxin sub-subfamily. In terms of tissue distribution, expressed by the venom gland.

Its subcellular location is the secreted. In terms of biological role, binds to muscle nicotinic acetylcholine receptor (nAChR) and inhibit acetylcholine from binding to the receptor, thereby impairing neuromuscular transmission. The chain is Short neurotoxin 1 from Hoplocephalus stephensii (Stephens's banded snake).